Here is a 372-residue protein sequence, read N- to C-terminus: UDP-N-acetylglucosamine--N-acetylmuramyl-(pentapeptide) pyrophosphoryl-undecaprenol N-acetylglucosamine transferase (372 aa).

UDP-N-acetyl-alpha-D-glucosamine is bound by residues 10 to 12 (TGG), N124, R166, S196, I256, and Q301.

The protein belongs to the glycosyltransferase 28 family. MurG subfamily.

Its subcellular location is the cell membrane. The enzyme catalyses di-trans,octa-cis-undecaprenyl diphospho-N-acetyl-alpha-D-muramoyl-L-alanyl-D-glutamyl-meso-2,6-diaminopimeloyl-D-alanyl-D-alanine + UDP-N-acetyl-alpha-D-glucosamine = di-trans,octa-cis-undecaprenyl diphospho-[N-acetyl-alpha-D-glucosaminyl-(1-&gt;4)]-N-acetyl-alpha-D-muramoyl-L-alanyl-D-glutamyl-meso-2,6-diaminopimeloyl-D-alanyl-D-alanine + UDP + H(+). The protein operates within cell wall biogenesis; peptidoglycan biosynthesis. Cell wall formation. Catalyzes the transfer of a GlcNAc subunit on undecaprenyl-pyrophosphoryl-MurNAc-pentapeptide (lipid intermediate I) to form undecaprenyl-pyrophosphoryl-MurNAc-(pentapeptide)GlcNAc (lipid intermediate II). In Desulforamulus reducens (strain ATCC BAA-1160 / DSM 100696 / MI-1) (Desulfotomaculum reducens), this protein is UDP-N-acetylglucosamine--N-acetylmuramyl-(pentapeptide) pyrophosphoryl-undecaprenol N-acetylglucosamine transferase.